The primary structure comprises 206 residues: Small ribosomal subunit protein uS4A (206 aa).

Residues 96-156 (GRLDNVVYRM…EKAKKQSRIG (61 aa)) form the S4 RNA-binding domain.

The protein belongs to the universal ribosomal protein uS4 family. In terms of assembly, part of the 30S ribosomal subunit. Contacts protein S5. The interaction surface between S4 and S5 is involved in control of translational fidelity.

Functionally, one of the primary rRNA binding proteins, it binds directly to 16S rRNA where it nucleates assembly of the body of the 30S subunit. In terms of biological role, with S5 and S12 plays an important role in translational accuracy. This is Small ribosomal subunit protein uS4A from Psychromonas ingrahamii (strain DSM 17664 / CCUG 51855 / 37).